The chain runs to 146 residues: Putative pre-16S rRNA nuclease (146 aa).

This sequence belongs to the YqgF nuclease family.

Its subcellular location is the cytoplasm. In terms of biological role, could be a nuclease involved in processing of the 5'-end of pre-16S rRNA. The sequence is that of Putative pre-16S rRNA nuclease from Pseudomonas savastanoi pv. phaseolicola (strain 1448A / Race 6) (Pseudomonas syringae pv. phaseolicola (strain 1448A / Race 6)).